We begin with the raw amino-acid sequence, 318 residues long: Ribosomal RNA small subunit methyltransferase H (318 aa).

Residues 38–40 (AGH), Asp-57, Leu-91, Asp-105, and Gln-112 contribute to the S-adenosyl-L-methionine site.

It belongs to the methyltransferase superfamily. RsmH family.

It is found in the cytoplasm. The enzyme catalyses cytidine(1402) in 16S rRNA + S-adenosyl-L-methionine = N(4)-methylcytidine(1402) in 16S rRNA + S-adenosyl-L-homocysteine + H(+). Functionally, specifically methylates the N4 position of cytidine in position 1402 (C1402) of 16S rRNA. The polypeptide is Ribosomal RNA small subunit methyltransferase H (Clavibacter sepedonicus (Clavibacter michiganensis subsp. sepedonicus)).